The chain runs to 139 residues: Acidic phospholipase A2 Ts-A4 (139 aa).

The first 16 residues, 1 to 16, serve as a signal peptide directing secretion; that stretch reads MRTLWILAVLLVGVEG. Intrachain disulfides connect Cys42–Cys132, Cys44–Cys60, Cys59–Cys111, Cys65–Cys139, Cys66–Cys104, Cys73–Cys97, and Cys91–Cys102. Positions 43, 45, and 47 each coordinate Ca(2+). The active site involves His63. Residue Asp64 participates in Ca(2+) binding. Residue Asp105 is part of the active site.

The cofactor is Ca(2+). As to expression, expressed by the venom gland.

Its subcellular location is the secreted. It catalyses the reaction a 1,2-diacyl-sn-glycero-3-phosphocholine + H2O = a 1-acyl-sn-glycero-3-phosphocholine + a fatty acid + H(+). In terms of biological role, PLA2 catalyzes the calcium-dependent hydrolysis of the 2-acyl groups in 3-sn-phosphoglycerides. The polypeptide is Acidic phospholipase A2 Ts-A4 (Trimeresurus stejnegeri (Chinese green tree viper)).